A 174-amino-acid polypeptide reads, in one-letter code: Photosystem I assembly protein Ycf4 (174 aa).

A run of 2 helical transmembrane segments spans residues 11-31 (LSNI…FLNG) and 56-76 (IILM…CLTI).

This sequence belongs to the Ycf4 family.

It localises to the plastid. It is found in the chloroplast thylakoid membrane. In terms of biological role, seems to be required for the assembly of the photosystem I complex. The polypeptide is Photosystem I assembly protein Ycf4 (Emiliania huxleyi (Coccolithophore)).